A 208-amino-acid polypeptide reads, in one-letter code: Cytochrome c biogenesis ATP-binding export protein CcmA (208 aa).

The region spanning 3–206 (LSGKDLAAHR…LEKFVPSQER (204 aa)) is the ABC transporter domain. 35 to 42 (GPNGIGKS) lines the ATP pocket.

It belongs to the ABC transporter superfamily. CcmA exporter (TC 3.A.1.107) family. In terms of assembly, the complex is composed of two ATP-binding proteins (CcmA) and two transmembrane proteins (CcmB).

It localises to the cell inner membrane. The catalysed reaction is heme b(in) + ATP + H2O = heme b(out) + ADP + phosphate + H(+). In terms of biological role, part of the ABC transporter complex CcmAB involved in the biogenesis of c-type cytochromes; once thought to export heme, this seems not to be the case, but its exact role is uncertain. Responsible for energy coupling to the transport system. This is Cytochrome c biogenesis ATP-binding export protein CcmA from Bartonella quintana (strain Toulouse) (Rochalimaea quintana).